The primary structure comprises 116 residues: Large ribosomal subunit protein uL18 (116 aa).

This sequence belongs to the universal ribosomal protein uL18 family. As to quaternary structure, part of the 50S ribosomal subunit; part of the 5S rRNA/L5/L18/L25 subcomplex. Contacts the 5S and 23S rRNAs.

In terms of biological role, this is one of the proteins that bind and probably mediate the attachment of the 5S RNA into the large ribosomal subunit, where it forms part of the central protuberance. In Novosphingobium aromaticivorans (strain ATCC 700278 / DSM 12444 / CCUG 56034 / CIP 105152 / NBRC 16084 / F199), this protein is Large ribosomal subunit protein uL18.